The primary structure comprises 695 residues: Elongation factor G (695 aa).

A tr-type G domain is found at 8–282; sequence KDTRNIGIMA…AIVDYMPAPI (275 aa). Residues 17 to 24, 81 to 85, and 135 to 138 each bind GTP; these read AHIDAGKT, DTPGH, and NKMD. The tract at residues 285–304 is disordered; it reads PDIKGVDPQTDEPTTRKSSD.

The protein belongs to the TRAFAC class translation factor GTPase superfamily. Classic translation factor GTPase family. EF-G/EF-2 subfamily.

The protein localises to the cytoplasm. Functionally, catalyzes the GTP-dependent ribosomal translocation step during translation elongation. During this step, the ribosome changes from the pre-translocational (PRE) to the post-translocational (POST) state as the newly formed A-site-bound peptidyl-tRNA and P-site-bound deacylated tRNA move to the P and E sites, respectively. Catalyzes the coordinated movement of the two tRNA molecules, the mRNA and conformational changes in the ribosome. In Finegoldia magna (strain ATCC 29328 / DSM 20472 / WAL 2508) (Peptostreptococcus magnus), this protein is Elongation factor G.